We begin with the raw amino-acid sequence, 745 residues long: Copper-transporting ATPase (745 aa).

One can recognise an HMA domain in the interval 1-67; that stretch reads MKESFYIEGM…LIEKLGYSPK (67 aa). Residues 1–83 are Cytoplasmic-facing; it reads MKESFYIEGM…KKEFFSPNVK (83 aa). Cys12 and Cys15 together coordinate Cu cation. Residues 84-104 traverse the membrane as a helical segment; the sequence is LALAVIFTLFVVYLSMGAMLS. At 105–124 the chain is on the extracellular side; sequence PSLLPESLLAINNHSNFLNA. A helical transmembrane segment spans residues 125 to 144; that stretch reads CLQLIGALIVMHLGRDFYIQ. Residues 145 to 151 are Cytoplasmic-facing; it reads GFKALWH. A helical transmembrane segment spans residues 152–172; it reads RQPNMSSLIAIGTSAALISSL. At 173-194 the chain is on the extracellular side; it reads WQLYLVYTNHYTDQWSYGHYYF. The chain crosses the membrane as a helical span at residues 195-215; the sequence is ESVCVILMFVMVGKRIENVSK. Topologically, residues 216-343 are cytoplasmic; the sequence is DKALDAMQAL…KAEISRLADK (128 aa). Residues 344-366 traverse the membrane as a helical segment; it reads VSSVFVPSVIAIAILAFVVWLII. At 367-379 the chain is on the extracellular side; that stretch reads APKPDFWWNFGIA. The helical transmembrane segment at 380-397 threads the bilayer; it reads LEVFVSVLVISCPCALGL. Topologically, residues 398-685 are cytoplasmic; sequence ATPMSILVAN…KLSQATIKNI (288 aa). The active-site 4-aspartylphosphate intermediate is Asp435. Asp631 and Asp635 together coordinate Mg(2+). Residues 686–705 form a helical membrane-spanning segment; sequence KENLFWAFCYNSVFIPLACG. Topologically, residues 706 to 716 are extracellular; that stretch reads VLYKANIMLSP. A helical membrane pass occupies residues 717 to 735; that stretch reads AIAGLAMSLSSVSVVLNSQ. Topologically, residues 736-745 are cytoplasmic; sequence RLRNFKIKDH.

The protein belongs to the cation transport ATPase (P-type) (TC 3.A.3) family. Type IB subfamily.

Its subcellular location is the cell membrane. It catalyses the reaction Cu(2+)(in) + ATP + H2O = Cu(2+)(out) + ADP + phosphate + H(+). In terms of biological role, probably involved in copper export. This chain is Copper-transporting ATPase (copA), found in Helicobacter pylori (Campylobacter pylori).